The chain runs to 976 residues: Serine/threonine-protein kinase CLA4 (976 aa).

Residues 1–46 (MTSIYTSDLKNHRRAPPPPNGAAGSGSGSSSGSGSGSGSGSGSGSL) are disordered. A compositionally biased stretch (gly residues) spans 23 to 43 (AGSGSGSSSGSGSGSGSGSGS). A PH domain is found at 73–184 (SKRQSGWVHV…WLDAFTTKCP (112 aa)). The disordered stretch occupies residues 207–231 (LTNGSLNGNSSSSPTSGLSSSSVLT). Residues 237 to 250 (VSGPINFTHKVHVG) form the CRIB domain. Disordered regions lie at residues 298 to 522 (GGNS…KIHP) and 559 to 658 (SKKS…QLKK). 2 stretches are compositionally biased toward low complexity: residues 313–332 (NSKT…AKNN) and 371–411 (LNGS…PLNN). Over residues 430–440 (SGTSSDTYSNK) the composition is skewed to polar residues. A compositionally biased stretch (basic and acidic residues) spans 441–455 (NHQDRSGYEQQRQQR). Low complexity predominate over residues 456–487 (TDSSQQQQQQQKQHQYQQKSQQQQQQPLSSHQ). Residues 496 to 505 (QVPPTLPSSG) show a composition bias toward pro residues. The span at 559–583 (SKKSQQQLASKQPSPPSSQQQQQKP) shows a compositional bias: low complexity. Over residues 622–635 (NETSGVSKTPSPTD) the composition is skewed to polar residues. The 256-residue stretch at 685 to 940 (FRIVEKAGQG…TDELLEHSFI (256 aa)) folds into the Protein kinase domain. ATP-binding positions include 691–699 (AGQGASGNV) and Lys715. Catalysis depends on Asp808, which acts as the Proton acceptor.

This sequence belongs to the protein kinase superfamily. STE Ser/Thr protein kinase family. STE20 subfamily. In terms of assembly, interacts (via the CRIB domain) with CDC42.

It catalyses the reaction L-seryl-[protein] + ATP = O-phospho-L-seryl-[protein] + ADP + H(+). It carries out the reaction L-threonyl-[protein] + ATP = O-phospho-L-threonyl-[protein] + ADP + H(+). Ser/Thr kinase required for wild-type filamentous growth, chlamydospore formation, and virulence in mouse systemic infection. In Candida albicans (strain SC5314 / ATCC MYA-2876) (Yeast), this protein is Serine/threonine-protein kinase CLA4 (CLA4).